We begin with the raw amino-acid sequence, 177 residues long: Adenine phosphoribosyltransferase (177 aa).

The protein belongs to the purine/pyrimidine phosphoribosyltransferase family. In terms of assembly, homodimer.

It is found in the cytoplasm. It carries out the reaction AMP + diphosphate = 5-phospho-alpha-D-ribose 1-diphosphate + adenine. It participates in purine metabolism; AMP biosynthesis via salvage pathway; AMP from adenine: step 1/1. In terms of biological role, catalyzes a salvage reaction resulting in the formation of AMP, that is energically less costly than de novo synthesis. The sequence is that of Adenine phosphoribosyltransferase from Rhodococcus opacus (strain B4).